The primary structure comprises 101 residues: NADH-quinone oxidoreductase subunit K (101 aa).

3 helical membrane passes run 4 to 24, 29 to 49, and 65 to 85; these read VGHY…GIFI, IIVI…NLVA, and FVLT…VIYF.

This sequence belongs to the complex I subunit 4L family. In terms of assembly, NDH-1 is composed of 14 different subunits. Subunits NuoA, H, J, K, L, M, N constitute the membrane sector of the complex.

The protein resides in the cell inner membrane. It carries out the reaction a quinone + NADH + 5 H(+)(in) = a quinol + NAD(+) + 4 H(+)(out). NDH-1 shuttles electrons from NADH, via FMN and iron-sulfur (Fe-S) centers, to quinones in the respiratory chain. The immediate electron acceptor for the enzyme in this species is believed to be ubiquinone. Couples the redox reaction to proton translocation (for every two electrons transferred, four hydrogen ions are translocated across the cytoplasmic membrane), and thus conserves the redox energy in a proton gradient. This Sphingopyxis alaskensis (strain DSM 13593 / LMG 18877 / RB2256) (Sphingomonas alaskensis) protein is NADH-quinone oxidoreductase subunit K.